A 448-amino-acid polypeptide reads, in one-letter code: Phosphoglucosamine mutase (448 aa).

The active-site Phosphoserine intermediate is the serine 102. Mg(2+) contacts are provided by serine 102, aspartate 243, aspartate 245, and aspartate 247. Serine 102 carries the post-translational modification Phosphoserine.

Belongs to the phosphohexose mutase family. The cofactor is Mg(2+). Post-translationally, activated by phosphorylation.

The enzyme catalyses alpha-D-glucosamine 1-phosphate = D-glucosamine 6-phosphate. Functionally, catalyzes the conversion of glucosamine-6-phosphate to glucosamine-1-phosphate. This Mycobacterium bovis (strain ATCC BAA-935 / AF2122/97) protein is Phosphoglucosamine mutase.